Reading from the N-terminus, the 454-residue chain is Bifunctional protein GlmU (454 aa).

The tract at residues 1–232 is pyrophosphorylase; that stretch reads MTDRTCLSIV…VDNVIGINNR (232 aa). UDP-N-acetyl-alpha-D-glucosamine contacts are provided by residues 11–14, K25, Q78, and 83–84; these read LAAG and GT. D108 contributes to the Mg(2+) binding site. Residues G144, E158, N173, and N230 each contribute to the UDP-N-acetyl-alpha-D-glucosamine site. Mg(2+) is bound at residue N230. Residues 233 to 253 form a linker region; that stretch reads VELAEAEAIWQQRKRREMMLA. Residues 254 to 454 form an N-acetyltransferase region; it reads GVTLIAPETV…AIKAAKTATK (201 aa). Residues R319 and K337 each coordinate UDP-N-acetyl-alpha-D-glucosamine. H349 serves as the catalytic Proton acceptor. UDP-N-acetyl-alpha-D-glucosamine is bound by residues Y352 and N363. Acetyl-CoA-binding positions include A366, 372 to 373, S391, S409, and R426; that span reads NY.

In the N-terminal section; belongs to the N-acetylglucosamine-1-phosphate uridyltransferase family. The protein in the C-terminal section; belongs to the transferase hexapeptide repeat family. In terms of assembly, homotrimer. Mg(2+) is required as a cofactor.

The protein resides in the cytoplasm. It catalyses the reaction alpha-D-glucosamine 1-phosphate + acetyl-CoA = N-acetyl-alpha-D-glucosamine 1-phosphate + CoA + H(+). The catalysed reaction is N-acetyl-alpha-D-glucosamine 1-phosphate + UTP + H(+) = UDP-N-acetyl-alpha-D-glucosamine + diphosphate. Its pathway is nucleotide-sugar biosynthesis; UDP-N-acetyl-alpha-D-glucosamine biosynthesis; N-acetyl-alpha-D-glucosamine 1-phosphate from alpha-D-glucosamine 6-phosphate (route II): step 2/2. It functions in the pathway nucleotide-sugar biosynthesis; UDP-N-acetyl-alpha-D-glucosamine biosynthesis; UDP-N-acetyl-alpha-D-glucosamine from N-acetyl-alpha-D-glucosamine 1-phosphate: step 1/1. It participates in bacterial outer membrane biogenesis; LPS lipid A biosynthesis. Functionally, catalyzes the last two sequential reactions in the de novo biosynthetic pathway for UDP-N-acetylglucosamine (UDP-GlcNAc). The C-terminal domain catalyzes the transfer of acetyl group from acetyl coenzyme A to glucosamine-1-phosphate (GlcN-1-P) to produce N-acetylglucosamine-1-phosphate (GlcNAc-1-P), which is converted into UDP-GlcNAc by the transfer of uridine 5-monophosphate (from uridine 5-triphosphate), a reaction catalyzed by the N-terminal domain. The sequence is that of Bifunctional protein GlmU from Brucella anthropi (strain ATCC 49188 / DSM 6882 / CCUG 24695 / JCM 21032 / LMG 3331 / NBRC 15819 / NCTC 12168 / Alc 37) (Ochrobactrum anthropi).